The primary structure comprises 536 residues: Chaperonin GroEL 1 (536 aa).

ATP contacts are provided by residues 29–32, 86–90, Gly413, 476–478, and Asp492; these read TLGP, DGTTT, and NAA.

The protein belongs to the chaperonin (HSP60) family. Forms a cylinder of 14 subunits composed of two heptameric rings stacked back-to-back. Interacts with the co-chaperonin GroES.

It is found in the cytoplasm. It catalyses the reaction ATP + H2O + a folded polypeptide = ADP + phosphate + an unfolded polypeptide.. In terms of biological role, together with its co-chaperonin GroES, plays an essential role in assisting protein folding. The GroEL-GroES system forms a nano-cage that allows encapsulation of the non-native substrate proteins and provides a physical environment optimized to promote and accelerate protein folding. The sequence is that of Chaperonin GroEL 1 from Nocardia farcinica (strain IFM 10152).